The chain runs to 439 residues: Xaa-Pro dipeptidase (439 aa).

Positions 244, 255, 335, 380, and 419 each coordinate Mn(2+).

The protein belongs to the peptidase M24B family. Bacterial-type prolidase subfamily. Requires Mn(2+) as cofactor.

It catalyses the reaction Xaa-L-Pro dipeptide + H2O = an L-alpha-amino acid + L-proline. In terms of biological role, splits dipeptides with a prolyl residue in the C-terminal position. The protein is Xaa-Pro dipeptidase of Shewanella sp. (strain MR-4).